We begin with the raw amino-acid sequence, 514 residues long: Bifunctional purine biosynthesis protein PurH (514 aa).

The MGS-like domain maps to 1–146 (MARLALLSVS…KNFAHLAVLC (146 aa)).

The protein belongs to the PurH family.

It carries out the reaction (6R)-10-formyltetrahydrofolate + 5-amino-1-(5-phospho-beta-D-ribosyl)imidazole-4-carboxamide = 5-formamido-1-(5-phospho-D-ribosyl)imidazole-4-carboxamide + (6S)-5,6,7,8-tetrahydrofolate. It catalyses the reaction IMP + H2O = 5-formamido-1-(5-phospho-D-ribosyl)imidazole-4-carboxamide. Its pathway is purine metabolism; IMP biosynthesis via de novo pathway; 5-formamido-1-(5-phospho-D-ribosyl)imidazole-4-carboxamide from 5-amino-1-(5-phospho-D-ribosyl)imidazole-4-carboxamide (10-formyl THF route): step 1/1. The protein operates within purine metabolism; IMP biosynthesis via de novo pathway; IMP from 5-formamido-1-(5-phospho-D-ribosyl)imidazole-4-carboxamide: step 1/1. The sequence is that of Bifunctional purine biosynthesis protein PurH from Nostoc punctiforme (strain ATCC 29133 / PCC 73102).